A 256-amino-acid chain; its full sequence is Enolase-phosphatase E1 (256 aa).

Aspartate 14 and glutamate 16 together coordinate Mg(2+). Substrate-binding positions include serine 142–serine 143 and lysine 176. Residue aspartate 201 coordinates Mg(2+).

It belongs to the HAD-like hydrolase superfamily. MasA/MtnC family. As to quaternary structure, monomer. Mg(2+) serves as cofactor.

It is found in the cytoplasm. The protein localises to the nucleus. It catalyses the reaction 5-methylsulfanyl-2,3-dioxopentyl phosphate + H2O = 1,2-dihydroxy-5-(methylsulfanyl)pent-1-en-3-one + phosphate. It functions in the pathway amino-acid biosynthesis; L-methionine biosynthesis via salvage pathway; L-methionine from S-methyl-5-thio-alpha-D-ribose 1-phosphate: step 3/6. It participates in amino-acid biosynthesis; L-methionine biosynthesis via salvage pathway; L-methionine from S-methyl-5-thio-alpha-D-ribose 1-phosphate: step 4/6. Bifunctional enzyme that catalyzes the enolization of 2,3-diketo-5-methylthiopentyl-1-phosphate (DK-MTP-1-P) into the intermediate 2-hydroxy-3-keto-5-methylthiopentenyl-1-phosphate (HK-MTPenyl-1-P), which is then dephosphorylated to form the acireductone 1,2-dihydroxy-3-keto-5-methylthiopentene (DHK-MTPene). The polypeptide is Enolase-phosphatase E1 (Drosophila melanogaster (Fruit fly)).